The primary structure comprises 271 residues: Phosphatidylglycerol--prolipoprotein diacylglyceryl transferase (271 aa).

Transmembrane regions (helical) follow at residues 21-41 (ISVR…MWLA), 60-80 (LLFA…VLFY), 95-115 (VWTG…AMLW), 124-144 (FFGV…VGRL), 176-196 (SQLY…NWFI), 203-223 (GSVS…VEYV), and 230-250 (LGLF…MIIG). Arginine 143 contacts a 1,2-diacyl-sn-glycero-3-phospho-(1'-sn-glycerol).

This sequence belongs to the Lgt family.

It localises to the cell inner membrane. It carries out the reaction L-cysteinyl-[prolipoprotein] + a 1,2-diacyl-sn-glycero-3-phospho-(1'-sn-glycerol) = an S-1,2-diacyl-sn-glyceryl-L-cysteinyl-[prolipoprotein] + sn-glycerol 1-phosphate + H(+). The protein operates within protein modification; lipoprotein biosynthesis (diacylglyceryl transfer). Functionally, catalyzes the transfer of the diacylglyceryl group from phosphatidylglycerol to the sulfhydryl group of the N-terminal cysteine of a prolipoprotein, the first step in the formation of mature lipoproteins. This is Phosphatidylglycerol--prolipoprotein diacylglyceryl transferase from Vibrio vulnificus (strain CMCP6).